The sequence spans 100 residues: Large ribosomal subunit protein bL27 (100 aa).

A propeptide spanning residues 1 to 9 is cleaved from the precursor; it reads MLVMNLQLF.

It belongs to the bacterial ribosomal protein bL27 family. Post-translationally, the N-terminus is cleaved by ribosomal processing cysteine protease Prp.

This is Large ribosomal subunit protein bL27 from Clostridium botulinum (strain Hall / ATCC 3502 / NCTC 13319 / Type A).